We begin with the raw amino-acid sequence, 310 residues long: Malate dehydrogenase (310 aa).

NAD(+)-binding positions include 7-12 (GAGNVG) and Asp-32. The substrate site is built by Arg-81 and Arg-87. NAD(+)-binding positions include Asn-94 and 117 to 119 (VSN). Residues Asn-119 and Arg-150 each contribute to the substrate site. The Proton acceptor role is filled by His-174.

The protein belongs to the LDH/MDH superfamily. MDH type 3 family.

The catalysed reaction is (S)-malate + NAD(+) = oxaloacetate + NADH + H(+). Functionally, catalyzes the reversible oxidation of malate to oxaloacetate. The chain is Malate dehydrogenase from Chlorobium limicola (strain DSM 245 / NBRC 103803 / 6330).